The primary structure comprises 146 residues: Putative type II restriction enzyme MjaORF1200P (146 aa).

This sequence to A.pernix APE2001.

The enzyme catalyses Endonucleolytic cleavage of DNA to give specific double-stranded fragments with terminal 5'-phosphates.. A putative type II restriction enzyme, its methylase would be M.MjaORF1200P (AC Q58600). The protein is Putative type II restriction enzyme MjaORF1200P of Methanocaldococcus jannaschii (strain ATCC 43067 / DSM 2661 / JAL-1 / JCM 10045 / NBRC 100440) (Methanococcus jannaschii).